The following is a 209-amino-acid chain: Uracil phosphoribosyltransferase (209 aa).

5-phospho-alpha-D-ribose 1-diphosphate contacts are provided by residues Arg-79, Arg-104, and 131–139 (DPMLATGGS). Uracil contacts are provided by residues Ile-194 and 199-201 (GDA). Asp-200 serves as a coordination point for 5-phospho-alpha-D-ribose 1-diphosphate.

The protein belongs to the UPRTase family. Mg(2+) is required as a cofactor.

It carries out the reaction UMP + diphosphate = 5-phospho-alpha-D-ribose 1-diphosphate + uracil. It participates in pyrimidine metabolism; UMP biosynthesis via salvage pathway; UMP from uracil: step 1/1. Its activity is regulated as follows. Allosterically activated by GTP. Functionally, catalyzes the conversion of uracil and 5-phospho-alpha-D-ribose 1-diphosphate (PRPP) to UMP and diphosphate. This is Uracil phosphoribosyltransferase from Bacillus licheniformis (strain ATCC 14580 / DSM 13 / JCM 2505 / CCUG 7422 / NBRC 12200 / NCIMB 9375 / NCTC 10341 / NRRL NRS-1264 / Gibson 46).